The following is a 388-amino-acid chain: Ovalbumin-related protein Y (388 aa).

Residues C74 and C121 are joined by a disulfide bond. N95, N215, N293, and N312 each carry an N-linked (GlcNAc...) asparagine glycan.

Belongs to the serpin family. Ov-serpin subfamily. In terms of processing, N-glycosylated on at least two Asn residues by ovomucoid type carbohydrate units. Post-translationally, the N-terminus is blocked. Major protein of egg white. Expressed in the magnum of the oviduct (at protein level).

The protein resides in the secreted. The polypeptide is Ovalbumin-related protein Y (SERPINB14B) (Gallus gallus (Chicken)).